Consider the following 203-residue polypeptide: Holliday junction branch migration complex subunit RuvA (203 aa).

Residues 1 to 64 are domain I; the sequence is MIGRLRGIVL…EDAQLLFGFN (64 aa). Residues 65 to 142 form a domain II region; that stretch reads NKQERTLFRE…KGLHGDLFTP (78 aa). The flexible linker stretch occupies residues 143–154; the sequence is AADLVLTSPASP. Positions 155-203 are domain III; the sequence is AVDDAEAEAVAALVSLGYKPQEASRMVSKVAQADASSETLIREALRAAL.

This sequence belongs to the RuvA family. Homotetramer. Forms an RuvA(8)-RuvB(12)-Holliday junction (HJ) complex. HJ DNA is sandwiched between 2 RuvA tetramers; dsDNA enters through RuvA and exits via RuvB. An RuvB hexamer assembles on each DNA strand where it exits the tetramer. Each RuvB hexamer is contacted by two RuvA subunits (via domain III) on 2 adjacent RuvB subunits; this complex drives branch migration. In the full resolvosome a probable DNA-RuvA(4)-RuvB(12)-RuvC(2) complex forms which resolves the HJ.

It is found in the cytoplasm. The RuvA-RuvB-RuvC complex processes Holliday junction (HJ) DNA during genetic recombination and DNA repair, while the RuvA-RuvB complex plays an important role in the rescue of blocked DNA replication forks via replication fork reversal (RFR). RuvA specifically binds to HJ cruciform DNA, conferring on it an open structure. The RuvB hexamer acts as an ATP-dependent pump, pulling dsDNA into and through the RuvAB complex. HJ branch migration allows RuvC to scan DNA until it finds its consensus sequence, where it cleaves and resolves the cruciform DNA. The polypeptide is Holliday junction branch migration complex subunit RuvA (Cronobacter sakazakii (strain ATCC BAA-894) (Enterobacter sakazakii)).